Here is a 122-residue protein sequence, read N- to C-terminus: Basic phospholipase A2 LmTX-I (122 aa).

Cystine bridges form between C26/C115, C28/C44, C43/C95, C49/C122, C50/C88, and C75/C86. Y27, G29, and G31 together coordinate Ca(2+). Residue H47 is part of the active site. D48 provides a ligand contact to Ca(2+). Residue D89 is part of the active site.

In terms of assembly, monomer. The cofactor is Ca(2+). Expressed by the venom gland.

It is found in the secreted. The enzyme catalyses a 1,2-diacyl-sn-glycero-3-phosphocholine + H2O = a 1-acyl-sn-glycero-3-phosphocholine + a fatty acid + H(+). Inhibited by Mn(2+), Mg(2+), Zn(2+) and Cu(2+). Its function is as follows. Snake venom phospholipase A2 (PLA2) that displays neurotoxic and myotoxic activities. Induces inflammatory edema by mechanisms involving mast cell activation and arachidonic acid metabolites. Increases plasma creatine kinase activity. PLA2 catalyzes the calcium-dependent hydrolysis of the 2-acyl groups in 3-sn-phosphoglycerides. The protein is Basic phospholipase A2 LmTX-I of Lachesis muta muta (Bushmaster).